The following is a 307-amino-acid chain: MPSEHPFSDGISTPNPKETMNDTAQITAGYGRRYIVRTPDGTTYEASTRKKRVDFACGDRVRISPVNAEQVVIEDFLPRQSLLYRQDAWKTKLIAANVTQLLIVTAAVPSPSVRLLQRALLAAEAAGIRAVIVLNKADLPETALWLEKLKFYETLGYPVIETRVLENADSLRPVLQGHSNILLGQSGMGKSTLTNALLGSQTARTGDISAALDSGKHTTTHARLYDLNGETQLIDSPGLQEFGLHHLQAADLPHYFPDFRHLVGQCRFHNCTHRAEPGCAFKAAAETGAASPERLAFLQGITDELLG.

The tract at residues 1-21 (MPSEHPFSDGISTPNPKETMN) is disordered. Polar residues predominate over residues 10–21 (GISTPNPKETMN). In terms of domain architecture, CP-type G spans 85–242 (RQDAWKTKLI…LIDSPGLQEF (158 aa)). GTP is bound by residues 135–138 (NKAD) and 184–192 (GQSGMGKST). Positions 266, 271, 273, and 279 each coordinate Zn(2+).

The protein belongs to the TRAFAC class YlqF/YawG GTPase family. RsgA subfamily. Monomer. Associates with 30S ribosomal subunit, binds 16S rRNA. It depends on Zn(2+) as a cofactor.

It is found in the cytoplasm. Its function is as follows. One of several proteins that assist in the late maturation steps of the functional core of the 30S ribosomal subunit. Helps release RbfA from mature subunits. May play a role in the assembly of ribosomal proteins into the subunit. Circularly permuted GTPase that catalyzes slow GTP hydrolysis, GTPase activity is stimulated by the 30S ribosomal subunit. In Neisseria gonorrhoeae (strain NCCP11945), this protein is Small ribosomal subunit biogenesis GTPase RsgA.